The sequence spans 431 residues: Tol-Pal system protein TolB (431 aa).

A signal peptide spans 1-26 (MSLMTKLGFRALVASCLITAGSAANA). Positions 406–431 (DGSAPPQILSVQGGSVREPSWGPFMQ) are disordered.

This sequence belongs to the TolB family. As to quaternary structure, the Tol-Pal system is composed of five core proteins: the inner membrane proteins TolA, TolQ and TolR, the periplasmic protein TolB and the outer membrane protein Pal. They form a network linking the inner and outer membranes and the peptidoglycan layer.

The protein localises to the periplasm. Part of the Tol-Pal system, which plays a role in outer membrane invagination during cell division and is important for maintaining outer membrane integrity. This chain is Tol-Pal system protein TolB, found in Burkholderia cenocepacia (strain ATCC BAA-245 / DSM 16553 / LMG 16656 / NCTC 13227 / J2315 / CF5610) (Burkholderia cepacia (strain J2315)).